Reading from the N-terminus, the 22-residue chain is Heliocin (22 aa).

Q1 is modified (pyrrolidone carboxylic acid). Residues 1–22 (QRFIHPTYRPPPQPRRPVIMRA) are disordered. An O-linked (GalNAc...) threonine glycan is attached at T7.

As to quaternary structure, monomer. In terms of tissue distribution, hemolymph.

The protein resides in the secreted. Functionally, has antibacterial activity, preferentially against Gram-negative bacteria. The polypeptide is Heliocin (Heliothis virescens (Tobacco budworm moth)).